The primary structure comprises 438 residues: Trigger factor (438 aa).

The PPIase FKBP-type domain occupies 163–249 (EDFVLIDYEG…LKEIRKQILP (87 aa)).

The protein belongs to the FKBP-type PPIase family. Tig subfamily.

Its subcellular location is the cytoplasm. It carries out the reaction [protein]-peptidylproline (omega=180) = [protein]-peptidylproline (omega=0). Functionally, involved in protein export. Acts as a chaperone by maintaining the newly synthesized protein in an open conformation. Functions as a peptidyl-prolyl cis-trans isomerase. This chain is Trigger factor, found in Desulfatibacillum aliphaticivorans.